The following is a 394-amino-acid chain: Probable purine permease 8 (394 aa).

10 helical membrane-spanning segments follow: residues 45–65, 77–97, 113–133, 139–159, 172–192, 208–228, 247–267, 289–309, 315–335, and 344–364; these read WLRI…STIL, TWMG…FRFF, FSSF…VSAN, VGLL…QLAF, FTPF…LLVV, VIGI…LSLV, LVAY…FASG, TLAS…GLIF, FSNS…VIVF, and IFSI…HYLD. The interval 373-394 is disordered; sequence TSPVGDPHLLPAEEGHTNIHSV. Over residues 383 to 394 the composition is skewed to basic and acidic residues; the sequence is PAEEGHTNIHSV.

It belongs to the purine permeases (TC 2.A.7.14) family.

The protein localises to the membrane. This chain is Probable purine permease 8 (PUP8), found in Arabidopsis thaliana (Mouse-ear cress).